Here is a 451-residue protein sequence, read N- to C-terminus: Phosphoglucosamine mutase (451 aa).

Residue S107 is the Phosphoserine intermediate of the active site. Mg(2+) contacts are provided by S107, D246, D248, and D250. S107 is modified (phosphoserine).

The protein belongs to the phosphohexose mutase family. Mg(2+) serves as cofactor. Post-translationally, activated by phosphorylation.

It catalyses the reaction alpha-D-glucosamine 1-phosphate = D-glucosamine 6-phosphate. Its function is as follows. Catalyzes the conversion of glucosamine-6-phosphate to glucosamine-1-phosphate. This chain is Phosphoglucosamine mutase, found in Burkholderia ambifaria (strain MC40-6).